Consider the following 251-residue polypeptide: Protein TK1472 (251 aa).

It belongs to the CinA family.

This chain is Protein TK1472, found in Thermococcus kodakarensis (strain ATCC BAA-918 / JCM 12380 / KOD1) (Pyrococcus kodakaraensis (strain KOD1)).